The chain runs to 267 residues: Myeloid leukemia factor 1 (267 aa).

Residues S6, S8, S32, and S34 each carry the phosphoserine modification. The interval 39-67 (RDLLSISDGRGRTHNRRERDDGEDSLTHA) is disordered. The segment at 50–125 (RTHNRRERDD…VGDEPPKVFQ (76 aa)) is interaction with COPS3.

Belongs to the MLF family. Interacts with CENPU. Also interacts with NRBP1/MADM, YWHAZ/14-3-3-zeta and HNRPUL2/MANP. NRBP1 recruits a serine kinase which phosphorylates both itself and MLF1. Phosphorylated MLF1 then binds to YWHAZ and is retained in the cytoplasm. Retained in the nucleus by binding to HNRPUL2. Binds to COPS3/CSN3 which is required for suppression of COP1 and activation of p53. In terms of processing, phosphorylation is required for binding to YWHAZ. In terms of tissue distribution, highly expressed in skeletal muscle, heart, testis. Also found in lung, but not in spleen, thymus, bone marrow, liver and kidney.

The protein resides in the cytoplasm. Its subcellular location is the nucleus. The protein localises to the cell projection. It is found in the cilium. It localises to the cytoskeleton. The protein resides in the cilium basal body. Functionally, involved in lineage commitment of primary hemopoietic progenitors by restricting erythroid formation and enhancing myeloid formation. Interferes with erythropoietin-induced erythroid terminal differentiation by preventing cells from exiting the cell cycle through suppression of CDKN1B/p27Kip1 levels. Suppresses COP1 activity via CSN3 which activates p53 and induces cell cycle arrest. Binds DNA and affects the expression of a number of genes so may function as a transcription factor in the nucleus. This is Myeloid leukemia factor 1 (Mlf1) from Mus musculus (Mouse).